We begin with the raw amino-acid sequence, 329 residues long: Meiotic drive suppressor wtf21 (329 aa).

A disordered region spans residues 1–68; sequence MKNNYTSLKS…RENNPSRSTD (68 aa). Basic and acidic residues predominate over residues 19–30; the sequence is KTDHEIDLEKGP. A run of 5 helical transmembrane segments spans residues 73 to 95, 110 to 132, 165 to 182, 192 to 214, and 290 to 312; these read FLIKLLISFTPIYVLNVLAICYL, WTLFGFWCLVCTLALIFLTYFYE, IIIWILWLIICCILFVYI, ALICSTCTISAVLLLIVSSVCIP, and GIAFILGGIGNAMMGLANAIRGA.

This sequence belongs to the WTF family. In terms of assembly, homomer. Interacts with other proteins that exhibit high sequence similarity.

Its subcellular location is the spore membrane. It localises to the vacuole membrane. Its function is as follows. Acts as a suppressor component of the dual wtf meiotic drive system, and can suppress but not confer meiotic drive by compatible poisons. Wtf meiotic drive systems promote unequal transmission of alleles from the parental zygote to progeny spores by encoding a poison and an antidote from the same locus; the poison is trans-acting and forms toxic aggregates in all spores within an ascus, wherease the antidote is spore-specific and targets aggregates for degradation by the vacuole. Meiotic drive by wtf systems therefore lead to poisoning of all progeny that do not inherit the dual poison/antidote allele, or express a compatible antidote. This Schizosaccharomyces pombe (strain 972 / ATCC 24843) (Fission yeast) protein is Meiotic drive suppressor wtf21.